A 231-amino-acid polypeptide reads, in one-letter code: Ribose-5-phosphate isomerase A (231 aa).

Substrate is bound by residues 40 to 43 (TGST), 93 to 96 (DGAD), and 106 to 109 (KGGG). Residue E115 is the Proton acceptor of the active site. K133 is a substrate binding site.

Belongs to the ribose 5-phosphate isomerase family. Homodimer.

It catalyses the reaction aldehydo-D-ribose 5-phosphate = D-ribulose 5-phosphate. The protein operates within carbohydrate degradation; pentose phosphate pathway; D-ribose 5-phosphate from D-ribulose 5-phosphate (non-oxidative stage): step 1/1. Its function is as follows. Catalyzes the reversible conversion of ribose-5-phosphate to ribulose 5-phosphate. The chain is Ribose-5-phosphate isomerase A from Escherichia coli O6:K15:H31 (strain 536 / UPEC).